A 2860-amino-acid polypeptide reads, in one-letter code: Methylcytosine dioxygenase TET (2860 aa).

Disordered stretches follow at residues 51–255 (HYTT…PHLQ) and 457–562 (GQPH…DAVS). Over residues 57–70 (HHPHSHSHPHHHYQ) the composition is skewed to basic residues. Composition is skewed to low complexity over residues 71-181 (QHYP…AASG) and 191-231 (ANAN…SNGS). A compositionally biased stretch (polar residues) spans 468-482 (TPTSYDGNNSNNSYP). Composition is skewed to low complexity over residues 492–508 (HTPH…TTTP) and 536–546 (SLESSAESEAS). The CXXC-type zinc-finger motif lies at 591-631 (SKKKRKRCGECVGCQRKDNCGECAPCRNDKSHQICKQRRCE). Cys598, Cys601, Cys604, Cys610, Cys613, Cys616, Cys625, and Cys630 together coordinate Zn(2+). Disordered stretches follow at residues 641–734 (GADG…NLQQ), 771–810 (QHFQ…DQPQ), 920–1113 (QVSA…EGYA), 1130–1155 (RKSD…QQTG), 1170–1195 (LSAN…QQVQ), 1209–1356 (AVGG…HSQY), and 1437–1460 (GYQH…IHGH). Low complexity predominate over residues 692–706 (TKANKLNAAAASATS). Polar residues predominate over residues 718–732 (LPQQSPNTTSATGNL). Composition is skewed to low complexity over residues 771–804 (QHFQ…QIQT), 930–942 (QQQQ…QQQQ), and 985–1021 (ATNS…GTTT). The segment covering 1040 to 1054 (PNQAVPQSPTRSNML) has biased composition (polar residues). A compositionally biased stretch (low complexity) spans 1076–1085 (QQQQQQQQQQ). Positions 1086–1097 (HLSSPPMQDWNW) are enriched in polar residues. Residues 1141–1153 (LQQQPQQVQQQQQ) show a composition bias toward low complexity. Low complexity-rich tracts occupy residues 1248–1263 (QDAQ…QPGQ) and 1299–1312 (SRAA…AEAA). Residues 1337 to 1349 (PPHPHAAGGPPPG) show a composition bias toward pro residues. Residues Cys1638, Cys1640, Cys1699, His1725, and Cys1727 each coordinate Zn(2+). The tract at residues 1657–2666 (LGTASSLMDL…RMTLIFYQHR (1010 aa)) is interaction with wds. Arg1767 is a binding site for 2-oxoglutarate. Cys1777, Cys1779, Cys1795, Cys1804, and Cys1862 together coordinate Zn(2+). Cys1878 is a 2-oxoglutarate binding site. Zn(2+) is bound at residue His1884. Positions 1886 and 1888 each coordinate Fe cation. Asn1891 is a binding site for substrate. A 2-oxoglutarate-binding site is contributed by His1919. Disordered regions lie at residues 1966-2115 (PCRR…LMSS), 2198-2229 (LTPS…PTGA), 2263-2334 (SNLT…NLTE), 2350-2371 (APLT…PPSD), 2422-2444 (MYPQ…MYGH), and 2536-2598 (LPDL…NSTK). Residues 1979–1989 (EAAPPDGDQDA) show a composition bias toward acidic residues. Composition is skewed to low complexity over residues 1993-2015 (ANSQ…QQSS) and 2029-2059 (GNGV…STPG). Polar residues predominate over residues 2069-2086 (RCQTPVTNNPSPAGSAFS). Over residues 2212–2229 (PPATSIAGGTTTGAPTGA) the composition is skewed to low complexity. A compositionally biased stretch (polar residues) spans 2263–2275 (SNLTNPGGVTTEV). The segment covering 2276-2285 (QQQHQQAQQQ) has biased composition (low complexity). Residues 2290-2304 (GGVGPGGLPVVGGAP) show a composition bias toward gly residues. Over residues 2426–2437 (QTPPPTPPPPSP) the composition is skewed to pro residues. Over residues 2540-2562 (SNGQTNSDTVATPTPTGDSSSND) the composition is skewed to polar residues. The span at 2570 to 2594 (AGNQAPASGAGAATTAPPIASPGST) shows a compositional bias: low complexity. Position 2642 (His2642) interacts with Fe cation. 2657–2659 (RMT) provides a ligand contact to 2-oxoglutarate. 2663–2665 (YQH) is a substrate binding site. Position 2673 (His2673) interacts with Zn(2+). Residues 2729-2860 (KESSANGQQL…HQQLPQQQQT (132 aa)) form a disordered region. Over residues 2732–2742 (SANGQQLKNGA) the composition is skewed to polar residues. The segment covering 2750–2768 (SSDSKKSQANEQSKNEKVA) has biased composition (basic and acidic residues). 2 stretches are compositionally biased toward low complexity: residues 2772-2785 (PTLT…LFPT) and 2798-2821 (NSSP…QQQH). A compositionally biased stretch (pro residues) spans 2822–2849 (LPPPPGSGLIHPPPGTPTGTAAPPPLPT). Low complexity predominate over residues 2850–2860 (PHQQLPQQQQT).

Belongs to the TET family. In terms of assembly, interacts (via C-terminus) with wds (via WD repeats). Fe(2+) serves as cofactor. Zn(2+) is required as a cofactor. Expressed in brain (at protein level).

The protein resides in the chromosome. It catalyses the reaction an N(6)-methyl-2'-deoxyadenosine in DNA + 2-oxoglutarate + O2 = a 2'-deoxyadenosine in DNA + formaldehyde + succinate + CO2. The catalysed reaction is a 5-methyl-2'-deoxycytidine in DNA + 2-oxoglutarate + O2 = a 5-hydroxymethyl-2'-deoxycytidine in DNA + succinate + CO2. It carries out the reaction a 5-hydroxymethyl-2'-deoxycytidine in DNA + 2-oxoglutarate + O2 = a 5-formyl-2'-deoxycytidine in DNA + succinate + CO2 + H2O. The enzyme catalyses a 5-formyl-2'-deoxycytidine in DNA + 2-oxoglutarate + O2 = a 5-carboxyl-2'-deoxycytidine in DNA + succinate + CO2 + H(+). Functionally, dioxygenase that specifically demethylates DNA methylated on the 6th position of adenine (N(6)-methyladenosine) DNA. N(6)-methyladenosine (m6A) DNA is present at a relatively high level at the very earliest embryonic stages but at low levels at the late embryonic stages and may act as a regulator of gene expression. Promotes differentiation of early germ cells in ovary. Contributes to neuronal morphology, development, and function in the brain. By interacting with histone modifier wds, binds to a specific set of genes, modulates intragenic (N(6)-methyladenosine) DNA levels and thereby maintains transcriptional activation. Also able to catalyze the conversion of the modified genomic base 5-methylcytosine (5mC) into 5-hydroxymethylcytosine (5hmC). This is Methylcytosine dioxygenase TET from Drosophila melanogaster (Fruit fly).